The sequence spans 445 residues: Phosphoglucosamine mutase 1 (445 aa).

The Phosphoserine intermediate role is filled by serine 102. Residues serine 102, aspartate 241, aspartate 243, and aspartate 245 each coordinate Mg(2+). At serine 102 the chain carries Phosphoserine.

It belongs to the phosphohexose mutase family. It depends on Mg(2+) as a cofactor. Post-translationally, activated by phosphorylation.

The catalysed reaction is alpha-D-glucosamine 1-phosphate = D-glucosamine 6-phosphate. Functionally, catalyzes the conversion of glucosamine-6-phosphate to glucosamine-1-phosphate. In Shewanella frigidimarina (strain NCIMB 400), this protein is Phosphoglucosamine mutase 1.